A 248-amino-acid polypeptide reads, in one-letter code: 26.2 kDa heat shock protein, mitochondrial (248 aa).

The N-terminal 32 residues, 1–32 (MASTVALKGRPLATLLRQLLAADAPPAATGRP), are a transit peptide targeting the mitochondrion. The tract at residues 26–48 (PAATGRPVAAAPAASGKPVTAPA) is disordered. The region spanning 139–248 (ATAAARRGGW…RKDVFQVNVE (110 aa)) is the sHSP domain.

The protein belongs to the small heat shock protein (HSP20) family. As to quaternary structure, may form oligomeric structures.

It localises to the mitochondrion. The sequence is that of 26.2 kDa heat shock protein, mitochondrial (HSP26.2) from Oryza sativa subsp. japonica (Rice).